Here is a 679-residue protein sequence, read N- to C-terminus: Acetyl-coenzyme A synthetase 2 (679 aa).

The tract at residues 1–32 is disordered; the sequence is MTSSPTHQVVHEANNIKKQETPKEFFERQPRQ. Residues 14–30 are compositionally biased toward basic and acidic residues; it reads NNIKKQETPKEFFERQP. Residues 207-210 and threonine 326 contribute to the CoA site; that span reads RGGK. ATP is bound by residues 402–404, 426–431, aspartate 517, and arginine 532; these read GEP and DTYWQT. A CoA-binding site is contributed by serine 540. An ATP-binding site is contributed by arginine 543. Arginine 611 is a binding site for CoA.

Belongs to the ATP-dependent AMP-binding enzyme family.

It catalyses the reaction acetate + ATP + CoA = acetyl-CoA + AMP + diphosphate. The protein is Acetyl-coenzyme A synthetase 2 (ACS2) of Debaryomyces hansenii (strain ATCC 36239 / CBS 767 / BCRC 21394 / JCM 1990 / NBRC 0083 / IGC 2968) (Yeast).